Here is a 185-residue protein sequence, read N- to C-terminus: ATP synthase subunit delta (185 aa).

Belongs to the ATPase delta chain family. F-type ATPases have 2 components, F(1) - the catalytic core - and F(0) - the membrane proton channel. F(1) has five subunits: alpha(3), beta(3), gamma(1), delta(1), epsilon(1). F(0) has three main subunits: a(1), b(2) and c(10-14). The alpha and beta chains form an alternating ring which encloses part of the gamma chain. F(1) is attached to F(0) by a central stalk formed by the gamma and epsilon chains, while a peripheral stalk is formed by the delta and b chains.

It is found in the cell inner membrane. F(1)F(0) ATP synthase produces ATP from ADP in the presence of a proton or sodium gradient. F-type ATPases consist of two structural domains, F(1) containing the extramembraneous catalytic core and F(0) containing the membrane proton channel, linked together by a central stalk and a peripheral stalk. During catalysis, ATP synthesis in the catalytic domain of F(1) is coupled via a rotary mechanism of the central stalk subunits to proton translocation. In terms of biological role, this protein is part of the stalk that links CF(0) to CF(1). It either transmits conformational changes from CF(0) to CF(1) or is implicated in proton conduction. The chain is ATP synthase subunit delta from Pelagibacter ubique (strain HTCC1062).